The sequence spans 95 residues: Small ribosomal subunit protein bS16 (95 aa).

This sequence belongs to the bacterial ribosomal protein bS16 family.

The protein is Small ribosomal subunit protein bS16 of Roseiflexus sp. (strain RS-1).